Consider the following 101-residue polypeptide: uncharacterized protein (101 aa).

The first 25 residues, Met1 to Cys25, serve as a signal peptide directing secretion.

This is an uncharacterized protein from Saccharomyces cerevisiae (strain ATCC 204508 / S288c) (Baker's yeast).